Here is a 468-residue protein sequence, read N- to C-terminus: Argininosuccinate lyase (468 aa).

Belongs to the lyase 1 family. Argininosuccinate lyase subfamily.

It localises to the cytoplasm. The catalysed reaction is 2-(N(omega)-L-arginino)succinate = fumarate + L-arginine. It functions in the pathway amino-acid biosynthesis; L-arginine biosynthesis; L-arginine from L-ornithine and carbamoyl phosphate: step 3/3. The sequence is that of Argininosuccinate lyase from Paraburkholderia phymatum (strain DSM 17167 / CIP 108236 / LMG 21445 / STM815) (Burkholderia phymatum).